The primary structure comprises 417 residues: Serine hydroxymethyltransferase (417 aa).

Residues Leu121 and 125 to 127 (GHL) each bind (6S)-5,6,7,8-tetrahydrofolate. An N6-(pyridoxal phosphate)lysine modification is found at Lys229. Residue 355–357 (SPF) participates in (6S)-5,6,7,8-tetrahydrofolate binding.

The protein belongs to the SHMT family. As to quaternary structure, homodimer. The cofactor is pyridoxal 5'-phosphate.

Its subcellular location is the cytoplasm. It carries out the reaction (6R)-5,10-methylene-5,6,7,8-tetrahydrofolate + glycine + H2O = (6S)-5,6,7,8-tetrahydrofolate + L-serine. The protein operates within one-carbon metabolism; tetrahydrofolate interconversion. It participates in amino-acid biosynthesis; glycine biosynthesis; glycine from L-serine: step 1/1. In terms of biological role, catalyzes the reversible interconversion of serine and glycine with tetrahydrofolate (THF) serving as the one-carbon carrier. This reaction serves as the major source of one-carbon groups required for the biosynthesis of purines, thymidylate, methionine, and other important biomolecules. Also exhibits THF-independent aldolase activity toward beta-hydroxyamino acids, producing glycine and aldehydes, via a retro-aldol mechanism. This chain is Serine hydroxymethyltransferase, found in Yersinia pestis bv. Antiqua (strain Antiqua).